A 456-amino-acid polypeptide reads, in one-letter code: MSEKASEERPIRLAVLGGTSTGKTSLVSRLTVNIVHEVHYPTRNQTNWLFGFVPSSILARAILDEQAHERLCLRSPSSQTLEPIFPSPQVSKNVLLSPLVFQASTDNFQSVRLHNKSHSRRSLSLDKSDSPLYQTFSNDINSQSVPKIKADQLNVIEHFKLPLNYIPPTYAPIQIDIIDTPGFSPDNVVPFLEVSLFRNLGKSILHGLADEPRRPVSTTSLLVASGASELNGKVDGYILVYSAVPELNHIGGPPEYGDDVMNTDTENVSDGGFELLKVIRNCILDAWTEFRNYEKRWEEGKEDDIYSLVYSLRHLWSKNSKEKSAKIEQLRSYNTKLKSIELDPSSPDSPPPCIIVCSHVNHELASPMLIEMGRQLATKWKYGFVGIDSMDDLNVDVAVSLLIKEISEKMKLLVSNSNGSSSSGNSSSIYNSHLMNDKKKNNNAGLNKNMLKKIIK.

The span at Ser-415 to Ser-428 shows a compositional bias: low complexity. Positions Ser-415–Ala-444 are disordered.

This is an uncharacterized protein from Saccharomyces cerevisiae (strain ATCC 204508 / S288c) (Baker's yeast).